A 351-amino-acid polypeptide reads, in one-letter code: DNA polymerase IV (351 aa).

Residues 4 to 185 (IIHVDMDCFF…LPLAKIPGVG (182 aa)) form the UmuC domain. Mg(2+) contacts are provided by D8 and D103. The active site involves E104.

It belongs to the DNA polymerase type-Y family. In terms of assembly, monomer. It depends on Mg(2+) as a cofactor.

The protein localises to the cytoplasm. The catalysed reaction is DNA(n) + a 2'-deoxyribonucleoside 5'-triphosphate = DNA(n+1) + diphosphate. Its function is as follows. Poorly processive, error-prone DNA polymerase involved in untargeted mutagenesis. Copies undamaged DNA at stalled replication forks, which arise in vivo from mismatched or misaligned primer ends. These misaligned primers can be extended by PolIV. Exhibits no 3'-5' exonuclease (proofreading) activity. May be involved in translesional synthesis, in conjunction with the beta clamp from PolIII. This Salmonella arizonae (strain ATCC BAA-731 / CDC346-86 / RSK2980) protein is DNA polymerase IV.